The sequence spans 736 residues: Phosphoribosylformylglycinamidine synthase subunit PurL (736 aa).

Residue His48 is part of the active site. ATP contacts are provided by Tyr51 and Lys90. Glu92 lines the Mg(2+) pocket. Residues 93–96 and Arg115 each bind substrate; that span reads SHNH. The Proton acceptor role is filled by His94. Asp116 contributes to the Mg(2+) binding site. A substrate-binding site is contributed by Gln239. Position 267 (Asp267) interacts with Mg(2+). Residue 311–313 coordinates substrate; the sequence is ESQ. Asp492 and Gly529 together coordinate ATP. Asn530 contacts Mg(2+). Ser532 serves as a coordination point for substrate.

This sequence belongs to the FGAMS family. In terms of assembly, monomer. Part of the FGAM synthase complex composed of 1 PurL, 1 PurQ and 2 PurS subunits.

The protein localises to the cytoplasm. The enzyme catalyses N(2)-formyl-N(1)-(5-phospho-beta-D-ribosyl)glycinamide + L-glutamine + ATP + H2O = 2-formamido-N(1)-(5-O-phospho-beta-D-ribosyl)acetamidine + L-glutamate + ADP + phosphate + H(+). It functions in the pathway purine metabolism; IMP biosynthesis via de novo pathway; 5-amino-1-(5-phospho-D-ribosyl)imidazole from N(2)-formyl-N(1)-(5-phospho-D-ribosyl)glycinamide: step 1/2. Its function is as follows. Part of the phosphoribosylformylglycinamidine synthase complex involved in the purines biosynthetic pathway. Catalyzes the ATP-dependent conversion of formylglycinamide ribonucleotide (FGAR) and glutamine to yield formylglycinamidine ribonucleotide (FGAM) and glutamate. The FGAM synthase complex is composed of three subunits. PurQ produces an ammonia molecule by converting glutamine to glutamate. PurL transfers the ammonia molecule to FGAR to form FGAM in an ATP-dependent manner. PurS interacts with PurQ and PurL and is thought to assist in the transfer of the ammonia molecule from PurQ to PurL. In Bradyrhizobium sp. (strain ORS 278), this protein is Phosphoribosylformylglycinamidine synthase subunit PurL.